Consider the following 80-residue polypeptide: Conotoxin Cl11.2 (80 aa).

The signal sequence occupies residues Met-1 to Gly-19. The propeptide occupies Glu-20–Gln-41. Cystine bridges form between Cys-45–Cys-59, Cys-52–Cys-63, Cys-58–Cys-68, and Cys-62–Cys-74.

It belongs to the conotoxin I1 superfamily. Expressed by the venom duct.

It localises to the secreted. The chain is Conotoxin Cl11.2 from Californiconus californicus (California cone).